We begin with the raw amino-acid sequence, 131 residues long: Large ribosomal subunit protein bL12 (131 aa).

It belongs to the bacterial ribosomal protein bL12 family. In terms of assembly, homodimer. Part of the ribosomal stalk of the 50S ribosomal subunit. Forms a multimeric L10(L12)X complex, where L10 forms an elongated spine to which 2 to 4 L12 dimers bind in a sequential fashion. Binds GTP-bound translation factors.

Forms part of the ribosomal stalk which helps the ribosome interact with GTP-bound translation factors. Is thus essential for accurate translation. This Tropheryma whipplei (strain Twist) (Whipple's bacillus) protein is Large ribosomal subunit protein bL12.